The chain runs to 305 residues: UDP-3-O-acyl-N-acetylglucosamine deacetylase (305 aa).

Positions 78, 235, and 239 each coordinate Zn(2+). Histidine 262 (proton donor) is an active-site residue.

This sequence belongs to the LpxC family. Zn(2+) serves as cofactor.

The catalysed reaction is a UDP-3-O-[(3R)-3-hydroxyacyl]-N-acetyl-alpha-D-glucosamine + H2O = a UDP-3-O-[(3R)-3-hydroxyacyl]-alpha-D-glucosamine + acetate. The protein operates within glycolipid biosynthesis; lipid IV(A) biosynthesis; lipid IV(A) from (3R)-3-hydroxytetradecanoyl-[acyl-carrier-protein] and UDP-N-acetyl-alpha-D-glucosamine: step 2/6. Catalyzes the hydrolysis of UDP-3-O-myristoyl-N-acetylglucosamine to form UDP-3-O-myristoylglucosamine and acetate, the committed step in lipid A biosynthesis. The polypeptide is UDP-3-O-acyl-N-acetylglucosamine deacetylase (Citrifermentans bemidjiense (strain ATCC BAA-1014 / DSM 16622 / JCM 12645 / Bem) (Geobacter bemidjiensis)).